Reading from the N-terminus, the 160-residue chain is Snaclec subunit A (160 aa).

The first 23 residues, 1–23, serve as a signal peptide directing secretion; it reads MGRFILVNLGLLVVAFSLRGSEA. Cystine bridges form between Cys25–Cys36, Cys53–Cys150, and Cys125–Cys142. Residues 32–151 form the C-type lectin domain; it reads YDKYCYKVFD…CDFTLPFICK (120 aa).

It belongs to the snaclec family. Heterodimer of subunits A and B; disulfide-linked. Expressed by the venom gland.

Its subcellular location is the secreted. Functionally, interferes with one step of hemostasis (modulation of platelet aggregation, or coagulation cascade, for example). The protein is Snaclec subunit A of Philodryas olfersii (Green snake).